A 129-amino-acid polypeptide reads, in one-letter code: uncharacterized protein (129 aa).

Residues 86–96 (NDGFSSDDEPE) show a composition bias toward acidic residues. Residues 86–116 (NDGFSSDDEPEEHVILTEDNQGEPSETPQAT) form a disordered region. The segment covering 103-116 (EDNQGEPSETPQAT) has biased composition (polar residues).

It belongs to the asfivirus D129L family.

This is an uncharacterized protein from African swine fever virus (strain Badajoz 1971 Vero-adapted) (Ba71V).